The primary structure comprises 67 residues: Large ribosomal subunit protein bL31 (67 aa).

It belongs to the bacterial ribosomal protein bL31 family. Type A subfamily. In terms of assembly, part of the 50S ribosomal subunit.

Functionally, binds the 23S rRNA. The sequence is that of Large ribosomal subunit protein bL31 from Wolinella succinogenes (strain ATCC 29543 / DSM 1740 / CCUG 13145 / JCM 31913 / LMG 7466 / NCTC 11488 / FDC 602W) (Vibrio succinogenes).